Here is a 739-residue protein sequence, read N- to C-terminus: MAVSERRLLAAMLAVAAAAALRVAAESEPGWDVAAPDLLYAEGTAAYSRGDWPGVVLNMERALRSRAALRALRLRCRTRCATELPWAPDLDLGPDPSLSQDPGAAALHDLRFFGAVLRRAACLRRCLGPPSAHLLSEELDLEFNKRSPYNYLQVAYFKINKLEKAVAAAHTFFVGNPEHMEMRQNLDYYQTMSGVKEADFRDLEAKPHMHEFRLGVRLYSEEKPQEAVPHLEAALQEYFVADEECRALCEGPYDYDGYNYLDYSADLFQAITDHYVQVLNCKQNCVTELASHPSREKPFEDFLPSHYNYLQFAYYNIGNYTQAIECAKTYLLFFPNDEVMHQNLAYYTAMLGEEEASSISPRENAEEYRRRSLLEKELLFFAYDIFGIPFVDPDSWTPEEVIPKRLQEKQKSERETAVRISQEIGNLMKEIETLVEEKTKESLDVSRLTREGGPLLYEGISLTMNSKVLNGSQRVVMDGVISDDECQELQRLTNAAATSGDGYRGQTSPHTPNEKFYGVTVLKALKLGQEGKVPLQSARMYYNVTEKVRRVMESYFRLDTPLYFSYSHLVCRTAIEESQAERKDSSHPVHVDNCILNAEALMCIKEPPAYTFRDYSAILYLNGDFDGGNFYFTELDAKTVTAEVQPQCGRAVGFSSGTENPHGVKAVTRGQRCAIALWFTLDPRHSERDRVQADDLVKMLFSPEEVDLPQEQPLPDQQGSPEPGEESLSDRGSLHKDEL.

The N-terminal stretch at 1 to 25 (MAVSERRLLAAMLAVAAAAALRVAA) is a signal peptide. 4 TPR repeats span residues 36 to 69 (PDLL…RAAL), 146 to 179 (RSPY…NPEH), 208 to 241 (HMHE…YFVA), and 304 to 337 (PSHY…FPND). N-linked (GlcNAc...) asparagine glycosylation is present at Asn-319. Residues 404–442 (KRLQEKQKSERETAVRISQEIGNLMKEIETLVEEKTKES) adopt a coiled-coil conformation. Asn-470 and Asn-543 each carry an N-linked (GlcNAc...) asparagine glycan. Positions 567–681 (SHLVCRTAIE…RCAIALWFTL (115 aa)) constitute a Fe2OG dioxygenase domain. Residues His-590, Asp-592, and His-662 each contribute to the Fe cation site. Residue Arg-672 is part of the active site. A disordered region spans residues 702–739 (SPEEVDLPQEQPLPDQQGSPEPGEESLSDRGSLHKDEL). The segment covering 709–718 (PQEQPLPDQQ) has biased composition (low complexity). The segment covering 728–739 (LSDRGSLHKDEL) has biased composition (basic and acidic residues). The short motif at 736–739 (KDEL) is the Prevents secretion from ER element.

It belongs to the leprecan family. Fe cation is required as a cofactor. It depends on L-ascorbate as a cofactor. Post-translationally, O-glycosylated; chondroitin sulfate.

The protein localises to the endoplasmic reticulum. It is found in the secreted. It localises to the extracellular space. The protein resides in the extracellular matrix. It carries out the reaction L-prolyl-[collagen] + 2-oxoglutarate + O2 = trans-3-hydroxy-L-prolyl-[collagen] + succinate + CO2. In terms of biological role, basement membrane-associated chondroitin sulfate proteoglycan (CSPG). Has prolyl 3-hydroxylase activity catalyzing the post-translational formation of 3-hydroxyproline in -Xaa-Pro-Gly- sequences in collagens, especially types IV and V. May be involved in the secretory pathway of cells. Has growth suppressive activity in fibroblasts. This is Prolyl 3-hydroxylase 1 from Mus musculus (Mouse).